The primary structure comprises 600 residues: Transcription factor efl-3 (600 aa).

The interval 35–65 is disordered; it reads LPEPRVNRTTDPDHENLLPSPVPRPSPAMSQ. Residues 39–50 show a composition bias toward basic and acidic residues; that stretch reads RVNRTTDPDHEN. DNA-binding regions lie at residues 95–164 and 253–343; these read RKEK…QWQG and RDRQ…VYCG.

It belongs to the E2F/DP family.

It localises to the nucleus. Probable transcription factor which represses gene expression in a subset of ventral nerve cord neurons. Involved in regulating programmed cell death and determining cell fate during development, acting in a partially redundant manner with lin-39 to repress the BH3 domain-encoding gene egl-1 in the VA and VB motor neurons. This chain is Transcription factor efl-3, found in Caenorhabditis elegans.